The primary structure comprises 359 residues: MLERLEFIESKYDELSVKISDPSVMANQSEWQKLCKEHSEVENIVLKYREYKKAKEDLEADKEMLRDKIDAELKEMVEEEIKELEKSVVDYEEELRVMLLPKDPNDSKNVFVEIRGGTGGEEAALFAADLFRMYTRYAERQGWHTEVMSANETDIGGFKEIVFMVKGNGAYSRMKYESGTHRVQRVPNTESSGRIHTSAATVAVLPEVDDVDIEINPNDIRIDVFRASGHGGQCVNTTDSAVRITHLPTGIVVSCQDEKRQLKNKEKAMKVLRARLYEKAEAERNAGIAENRRNQVGSGDRSERIRTYNFPQGRITDHRIGLTIYKLEQFLDGDIDEVINGLITAEQAEKMKEMGNTKD.

Glutamine 233 is subject to N5-methylglutamine.

The protein belongs to the prokaryotic/mitochondrial release factor family. In terms of processing, methylated by PrmC. Methylation increases the termination efficiency of RF1.

The protein localises to the cytoplasm. Its function is as follows. Peptide chain release factor 1 directs the termination of translation in response to the peptide chain termination codons UAG and UAA. In Clostridium acetobutylicum (strain ATCC 824 / DSM 792 / JCM 1419 / IAM 19013 / LMG 5710 / NBRC 13948 / NRRL B-527 / VKM B-1787 / 2291 / W), this protein is Peptide chain release factor 1.